Here is a 436-residue protein sequence, read N- to C-terminus: O-phosphoseryl-tRNA(Sec) selenium transferase (436 aa).

Positions 1 to 44 are tetramerization; sequence MLDFNIEGLIPKNMEKRGELVLNEYLKEIEDVFNHRKIPENGID. Arg72 contributes to the pyridoxal 5'-phosphate binding site. Positions 93–103 are phosphate loop (P-loop); sequence GRSGNLVDPQP. 3 residues coordinate substrate: Arg94, Ser95, and Gln102. The residue at position 278 (Lys278) is an N6-(pyridoxal phosphate)lysine. Arg307 is a substrate binding site.

The protein belongs to the SepSecS family. As to quaternary structure, homotetramer. Requires pyridoxal 5'-phosphate as cofactor.

The enzyme catalyses O-phospho-L-seryl-tRNA(Sec) + selenophosphate + H2O = L-selenocysteinyl-tRNA(Sec) + 2 phosphate. Its pathway is aminoacyl-tRNA biosynthesis; selenocysteinyl-tRNA(Sec) biosynthesis; selenocysteinyl-tRNA(Sec) from L-seryl-tRNA(Sec) (archaeal/eukaryal route): step 2/2. Converts O-phosphoseryl-tRNA(Sec) to selenocysteinyl-tRNA(Sec) required for selenoprotein biosynthesis. This chain is O-phosphoseryl-tRNA(Sec) selenium transferase (spcS), found in Methanococcus maripaludis (strain DSM 14266 / JCM 13030 / NBRC 101832 / S2 / LL).